Reading from the N-terminus, the 130-residue chain is ATP synthase epsilon chain (130 aa).

This sequence belongs to the ATPase epsilon chain family. In terms of assembly, F-type ATPases have 2 components, CF(1) - the catalytic core - and CF(0) - the membrane proton channel. CF(1) has five subunits: alpha(3), beta(3), gamma(1), delta(1), epsilon(1). CF(0) has three main subunits: a, b and c.

It is found in the cell inner membrane. Produces ATP from ADP in the presence of a proton gradient across the membrane. This is ATP synthase epsilon chain from Sulfurimonas denitrificans (strain ATCC 33889 / DSM 1251) (Thiomicrospira denitrificans (strain ATCC 33889 / DSM 1251)).